The sequence spans 91 residues: Conotoxin Im9.1 (91 aa).

The N-terminal stretch at 1–23 (MSKVGVVPLIFLVLLSIAALQNG) is a signal peptide. Positions 24-55 (DDPRRQRDEKQSPQGDILRSTLTKYSYNIQRR) are excised as a propeptide. Disulfide bonds link Cys-56–Cys-72, Cys-63–Cys-83, and Cys-66–Cys-86.

This sequence belongs to the conotoxin M superfamily. As to expression, expressed by the venom duct.

It is found in the secreted. In terms of biological role, probable neurotoxin. This is Conotoxin Im9.1 from Conus imperialis (Imperial cone).